A 330-amino-acid polypeptide reads, in one-letter code: Delta-aminolevulinic acid dehydratase (330 aa).

Zn(2+) contacts are provided by Cys-122, Cys-124, His-131, and Cys-132. The Schiff-base intermediate with substrate role is filled by Lys-199. N6-succinyllysine is present on Lys-199. Arg-209 serves as a coordination point for 5-aminolevulinate. Ser-215 carries the post-translational modification Phosphoserine. Arg-221 is a binding site for 5-aminolevulinate. Cys-223 provides a ligand contact to Zn(2+). Lys-252 serves as the catalytic Schiff-base intermediate with substrate. At Lys-252 the chain carries N6-succinyllysine. 2 residues coordinate 5-aminolevulinate: Ser-279 and Tyr-318.

Belongs to the ALAD family. As to quaternary structure, homooctamer; active form. Homohexamer; low activity form. Zn(2+) is required as a cofactor.

The protein resides in the cytoplasm. The protein localises to the cytosol. It carries out the reaction 2 5-aminolevulinate = porphobilinogen + 2 H2O + H(+). Its pathway is porphyrin-containing compound metabolism; protoporphyrin-IX biosynthesis; coproporphyrinogen-III from 5-aminolevulinate: step 1/4. Its activity is regulated as follows. Can alternate between a fully active homooctamer and a low-activity homohexamer. A bound magnesium ion may promote the assembly of the fully active homooctamer. The magnesium-binding site is absent in the low-activity homohexamer. Inhibited by compounds that favor the hexameric state. Inhibited by divalent lead ions. The lead ions partially displace the zinc cofactor. Functionally, catalyzes an early step in the biosynthesis of tetrapyrroles. Binds two molecules of 5-aminolevulinate per subunit, each at a distinct site, and catalyzes their condensation to form porphobilinogen. The protein is Delta-aminolevulinic acid dehydratase (Alad) of Mus musculus (Mouse).